The primary structure comprises 633 residues: Extracellular metalloproteinase 3 (633 aa).

Residues 1–18 form the signal peptide; that stretch reads MHGLLLAGLLALPMNVLA. Residues 19 to 246 constitute a propeptide that is removed on maturation; that stretch reads HPAEQHASNV…VHNVVDYVAS (228 aa). A glycan (N-linked (GlcNAc...) asparagine) is linked at asparagine 410. Histidine 429 serves as a coordination point for Zn(2+). The active site involves glutamate 430. Position 433 (histidine 433) interacts with Zn(2+). Asparagine 480 and asparagine 622 each carry an N-linked (GlcNAc...) asparagine glycan.

Belongs to the peptidase M36 family. Zn(2+) is required as a cofactor.

The protein resides in the secreted. In terms of biological role, secreted metalloproteinase probably acting as a virulence factor. The sequence is that of Extracellular metalloproteinase 3 (MEP3) from Trichophyton equinum (Horse ringworm fungus).